The primary structure comprises 176 residues: Small ribosomal subunit protein uS5c (176 aa).

Positions 26–89 constitute an S5 DRBM domain; that stretch reads LVERLIKISR…TDGRKNLIEL (64 aa).

This sequence belongs to the universal ribosomal protein uS5 family. In terms of assembly, part of the 30S ribosomal subunit. Contacts protein S4.

Its subcellular location is the plastid. It is found in the chloroplast. In terms of biological role, with S4 and S12 plays an important role in translational accuracy. The protein is Small ribosomal subunit protein uS5c (rps5) of Phaeodactylum tricornutum (strain CCAP 1055/1).